Here is a 266-residue protein sequence, read N- to C-terminus: Phosphatidate cytidylyltransferase (266 aa).

Transmembrane regions (helical) follow at residues 16–36, 52–72, 78–98, 101–121, 125–145, 164–184, 186–206, and 237–257; these read FVLI…LFWA, LFQV…WVAA, PIEC…YQKA, SEAI…FGVY, GAVA…GAFF, LEGA…VGMG, LSGG…VAVF, and LDSM…LEIW.

Belongs to the CDS family.

The protein localises to the cell inner membrane. It catalyses the reaction a 1,2-diacyl-sn-glycero-3-phosphate + CTP + H(+) = a CDP-1,2-diacyl-sn-glycerol + diphosphate. The protein operates within phospholipid metabolism; CDP-diacylglycerol biosynthesis; CDP-diacylglycerol from sn-glycerol 3-phosphate: step 3/3. The sequence is that of Phosphatidate cytidylyltransferase (cdsA) from Helicobacter pylori (strain ATCC 700392 / 26695) (Campylobacter pylori).